We begin with the raw amino-acid sequence, 277 residues long: Glucose-6-phosphatase catalytic subunit 1 (277 aa).

R4 provides a ligand contact to substrate. Helical transmembrane passes span 39–59 (GHAM…LSIA) and 67–87 (LLYR…ELVV). The active-site Proton donor is H40. Position 91 (R91) interacts with substrate. H97 serves as the catalytic Nucleophile. Transmembrane regions (helical) follow at residues 131–151 (FLIT…LKAL), 215–235 (IGCI…TFSP), and 250–270 (AVAL…IYPV). Residues 274 to 277 (GKNL) carry the Prevents secretion from ER motif.

It belongs to the glucose-6-phosphatase family.

It is found in the endoplasmic reticulum membrane. It carries out the reaction D-glucose 6-phosphate + H2O = D-glucose + phosphate. It functions in the pathway carbohydrate biosynthesis; gluconeogenesis. Hydrolyzes glucose-6-phosphate to glucose in the endoplasmic reticulum. Forms with the glucose-6-phosphate transporter (SLC37A4/G6PT) the complex responsible for glucose production in the terminal step of glycogenolysis and gluconeogenesis. Hence, it is the key enzyme in homeostatic regulation of blood glucose levels. This is Glucose-6-phosphatase catalytic subunit 1 (g6pc1) from Haplochromis xenognathus (Lake Victoria cichlid).